The sequence spans 97 residues: Putative membrane protein insertion efficiency factor (97 aa).

This sequence belongs to the UPF0161 family.

The protein localises to the cell membrane. Functionally, could be involved in insertion of integral membrane proteins into the membrane. The sequence is that of Putative membrane protein insertion efficiency factor from Lactobacillus helveticus (strain DPC 4571).